A 155-amino-acid chain; its full sequence is Small ribosomal subunit protein uS9 (155 aa).

This sequence belongs to the universal ribosomal protein uS9 family.

This chain is Small ribosomal subunit protein uS9, found in Rhizobium etli (strain ATCC 51251 / DSM 11541 / JCM 21823 / NBRC 15573 / CFN 42).